The following is an 824-amino-acid chain: Intraflagellar transport protein 88 homolog (824 aa).

Disordered regions lie at residues 1 to 27 (MENVHLAPETDEDDLYSGFNDYNPAYD) and 111 to 134 (AFDPLGQSRGPAPPLEAKNEDSPE). 11 TPR repeats span residues 196–229 (YSVLFNLASQYSANEMYAEALNTYQVIVKNKMFS), 232–265 (GRLKVNMGNIYLKQRNYSKAIKFYRMALDQIPSV), 271–304 (IKIMQNIGITFIKTGQYSDAINSFEHIMSMAPSL), 415–448 (NDLEINKAITYLRQKDFNQAVDTLKMFEKKDSRV), 450–483 (SAAATNLSFLYYLENEFAQASSYADLAVNSDRYN), 484–517 (PSALTNKGNTVFANGDYEKAAEFYKEALRNDSSC), 518–551 (TEALYNIGLTYKKLNRLDEALDSFLKLHAILRNS), 552–585 (AQVLCQIANIYELMEDPNQAIEWLMQLISVVPTD), 586–619 (SQALSKLGELYDSEGDKSQAFQYYYESYRYFPSN), 620–653 (IEVIEWLGAYYIDTQFCEKAIQYFERASLIQPTQ), and 654–687 (VKWQLMVASCFRRSGNYQKALDTYKEIHRKFPEN). The segment covering 721–731 (EMREQRIKSGR) has biased composition (basic and acidic residues). The disordered stretch occupies residues 721–824 (EMREQRIKSG…EELGDDLLPE (104 aa)). Residues 748–757 (DSGQNNSASS) show a composition bias toward polar residues. Over residues 797 to 808 (ERPKTAAKKRID) the composition is skewed to basic and acidic residues. Acidic residues predominate over residues 809–824 (EDDFADEELGDDLLPE).

As to quaternary structure, component of the IFT complex B, at least composed of IFT20, IFT22, IFT25, IFT27, IFT46, IFT52, TRAF3IP1/IFT54, IFT57, IFT74, IFT80, IFT81, and IFT88. Interacts with IFT20, IFT22, IFT25, IFT27, IFT52, TRAF3IP1, IFT74, IFT80 and IFT81. Interacts with IFT172. Interacts with IFT57. Interacts with IFT46. Interacts with IFT70B. Interacts with C2CD3. Interacts with ENTR1 (via N-terminus). Interacts with LRRC56. Interacts with DZIP1. Interacts with CCDC38. Interacts with CCDC146. Interacts with CFAP53. In terms of tissue distribution, testis.

Its subcellular location is the cytoplasm. The protein localises to the cytoskeleton. It localises to the microtubule organizing center. It is found in the centrosome. The protein resides in the centriole. Its subcellular location is the cilium basal body. The protein localises to the cell projection. It localises to the cilium. It is found in the flagellum. Positively regulates primary cilium biogenesis. Also involved in autophagy since it is required for trafficking of ATG16L and the expansion of the autophagic compartment. This chain is Intraflagellar transport protein 88 homolog (Ift88), found in Mus musculus (Mouse).